Consider the following 207-residue polypeptide: Nuclear transcription factor Y subunit beta (207 aa).

The tract at residues 1-52 (MTMDGDSSTTDASQLGISADYIGGSHYVIQPHDDTEDSMNDHEDTNGSKESF) is a domain. A disordered region spans residues 27 to 52 (YVIQPHDDTEDSMNDHEDTNGSKESF). Residues 39 to 52 (MNDHEDTNGSKESF) are compositionally biased toward basic and acidic residues. The b domain stretch occupies residues 53-142 (REQDIYLPIA…PLKLYLQKFR (90 aa)). Residues 59–65 (LPIANVA) mediate DNA binding. Positions 86-97 (VQECVSEFISFI) are subunit association domain (SAD). A Glycyl lysine isopeptide (Lys-Gly) (interchain with G-Cter in ubiquitin) cross-link involves residue K140. The segment at 143–207 (EAMKGEKGIG…ISGVQQIQFS (65 aa)) is c domain.

The protein belongs to the NFYB/HAP3 subunit family. Heterotrimeric transcription factor composed of three components, NF-YA, NF-YB and NF-YC. NF-YB and NF-YC must interact and dimerize for NF-YA association and DNA binding. Interacts with C1QBP. Post-translationally, monoubiquitination at Lys-140 plays an important role in transcriptional activation by allowing the deposition of histone H3 methylations as well as histone H2B monoubiquitination at 'Lys-121'.

It localises to the nucleus. In terms of biological role, component of the sequence-specific heterotrimeric transcription factor (NF-Y) which specifically recognizes a 5'-CCAAT-3' box motif found in the promoters of its target genes. NF-Y can function as both an activator and a repressor, depending on its interacting cofactors. The protein is Nuclear transcription factor Y subunit beta (NFYB) of Homo sapiens (Human).